Here is a 359-residue protein sequence, read N- to C-terminus: DNA polymerase IV (359 aa).

Positions 4 to 184 (IVHVDMDAFY…LPVNRIPGVG (181 aa)) constitute a UmuC domain. Residues aspartate 8 and aspartate 102 each contribute to the Mg(2+) site. The active site involves glutamate 103.

Belongs to the DNA polymerase type-Y family. In terms of assembly, monomer. It depends on Mg(2+) as a cofactor.

It is found in the cytoplasm. The enzyme catalyses DNA(n) + a 2'-deoxyribonucleoside 5'-triphosphate = DNA(n+1) + diphosphate. In terms of biological role, poorly processive, error-prone DNA polymerase involved in untargeted mutagenesis. Copies undamaged DNA at stalled replication forks, which arise in vivo from mismatched or misaligned primer ends. These misaligned primers can be extended by PolIV. Exhibits no 3'-5' exonuclease (proofreading) activity. May be involved in translesional synthesis, in conjunction with the beta clamp from PolIII. This Xanthomonas campestris pv. campestris (strain 8004) protein is DNA polymerase IV.